Consider the following 388-residue polypeptide: Succinate--CoA ligase [ADP-forming] subunit beta (388 aa).

Residues 9-244 (KALFAEYGLP…PSQDDAREAH (236 aa)) form the ATP-grasp domain. ATP-binding positions include Lys46, 53 to 55 (GRG), Glu99, Thr102, and Glu107. The Mg(2+) site is built by Asn199 and Asp213. Substrate contacts are provided by residues Asn264 and 321 to 323 (GIV).

The protein belongs to the succinate/malate CoA ligase beta subunit family. Heterotetramer of two alpha and two beta subunits. The cofactor is Mg(2+).

It catalyses the reaction succinate + ATP + CoA = succinyl-CoA + ADP + phosphate. It carries out the reaction GTP + succinate + CoA = succinyl-CoA + GDP + phosphate. Its pathway is carbohydrate metabolism; tricarboxylic acid cycle; succinate from succinyl-CoA (ligase route): step 1/1. Its function is as follows. Succinyl-CoA synthetase functions in the citric acid cycle (TCA), coupling the hydrolysis of succinyl-CoA to the synthesis of either ATP or GTP and thus represents the only step of substrate-level phosphorylation in the TCA. The beta subunit provides nucleotide specificity of the enzyme and binds the substrate succinate, while the binding sites for coenzyme A and phosphate are found in the alpha subunit. In Shewanella halifaxensis (strain HAW-EB4), this protein is Succinate--CoA ligase [ADP-forming] subunit beta.